The primary structure comprises 289 residues: Somatostatin-like receptor F_48D10.1 (289 aa).

The Extracellular segment spans residues methionine 1 to alanine 57. Asparagine 40 is a glycosylation site (N-linked (GlcNAc...) asparagine). Residues valine 58–leucine 79 form a helical membrane-spanning segment. The Cytoplasmic portion of the chain corresponds to arginine 80–asparagine 89. A helical membrane pass occupies residues isoleucine 90–alanine 110. Over threonine 111–arginine 126 the chain is Extracellular. Cysteine 125 and cysteine 221 are joined by a disulfide. A helical transmembrane segment spans residues valine 127–isoleucine 148. Residues aspartate 149 to lysine 170 are Cytoplasmic-facing. Residues valine 171 to serine 191 traverse the membrane as a helical segment. At aspartate 192 to threonine 240 the chain is on the extracellular side. Residues alanine 241–isoleucine 261 traverse the membrane as a helical segment. Residues lysine 262–arginine 289 are Cytoplasmic-facing.

Belongs to the G-protein coupled receptor 1 family.

It localises to the cell membrane. In Takifugu rubripes (Japanese pufferfish), this protein is Somatostatin-like receptor F_48D10.1.